Consider the following 531-residue polypeptide: Peptide chain release factor 3 (531 aa).

Positions 11–280 (GRRRTFAIIS…AFIRFASRPG (270 aa)) constitute a tr-type G domain. Residues 20–27 (SHPDAGKT), 88–92 (DTPGH), and 142–145 (NKLD) contribute to the GTP site.

It belongs to the TRAFAC class translation factor GTPase superfamily. Classic translation factor GTPase family. PrfC subfamily.

The protein localises to the cytoplasm. Its function is as follows. Increases the formation of ribosomal termination complexes and stimulates activities of RF-1 and RF-2. It binds guanine nucleotides and has strong preference for UGA stop codons. It may interact directly with the ribosome. The stimulation of RF-1 and RF-2 is significantly reduced by GTP and GDP, but not by GMP. This chain is Peptide chain release factor 3, found in Gloeobacter violaceus (strain ATCC 29082 / PCC 7421).